The sequence spans 318 residues: Methionyl-tRNA formyltransferase (318 aa).

115-118 (SLLP) lines the (6S)-5,6,7,8-tetrahydrofolate pocket.

It belongs to the Fmt family.

The catalysed reaction is L-methionyl-tRNA(fMet) + (6R)-10-formyltetrahydrofolate = N-formyl-L-methionyl-tRNA(fMet) + (6S)-5,6,7,8-tetrahydrofolate + H(+). Its function is as follows. Attaches a formyl group to the free amino group of methionyl-tRNA(fMet). The formyl group appears to play a dual role in the initiator identity of N-formylmethionyl-tRNA by promoting its recognition by IF2 and preventing the misappropriation of this tRNA by the elongation apparatus. This chain is Methionyl-tRNA formyltransferase, found in Deinococcus radiodurans (strain ATCC 13939 / DSM 20539 / JCM 16871 / CCUG 27074 / LMG 4051 / NBRC 15346 / NCIMB 9279 / VKM B-1422 / R1).